The primary structure comprises 46 residues: Large ribosomal subunit protein bL33A (46 aa).

Belongs to the bacterial ribosomal protein bL33 family.

The protein is Large ribosomal subunit protein bL33A of Mesomycoplasma hyopneumoniae (strain 7448) (Mycoplasma hyopneumoniae).